The following is a 102-amino-acid chain: MINSSDFSRSSAQIIKYPIITDKATRLLENNQYSFVVDRYSNKITIKSAIEYLFNVKVIKINTCRLPRKQKRVGKYVGWKPQYKKAIVTLSEGDIINLFTDS.

The protein belongs to the universal ribosomal protein uL23 family. In terms of assembly, part of the 50S ribosomal subunit.

Its subcellular location is the plastid. The protein localises to the chloroplast. Functionally, binds to 23S rRNA. This Phaeodactylum tricornutum (strain CCAP 1055/1) protein is Large ribosomal subunit protein uL23c (rpl23).